Here is a 167-residue protein sequence, read N- to C-terminus: SAR-endolysin (167 aa).

A helical; Signal-anchor for type II membrane protein transmembrane segment spans residues 10 to 32 (SVMAAISGGAIAIASVLITGPGG). Catalysis depends on proton donor/acceptor residues Glu37 and Asp46.

Belongs to the glycosyl hydrolase 24 family.

Its subcellular location is the host cell inner membrane. It catalyses the reaction Hydrolysis of (1-&gt;4)-beta-linkages between N-acetylmuramic acid and N-acetyl-D-glucosamine residues in a peptidoglycan and between N-acetyl-D-glucosamine residues in chitodextrins.. In terms of biological role, signal-arrest-release (SAR) endolysin with lysozyme activity that degrades host peptidoglycans and participates with the pinholin and spanin proteins in the sequential events which lead to programmed host cell lysis releasing the mature viral particles. Once the pinholin has permeabilized the host cell membrane, the SAR-endolysin is released into the periplasm where it breaks down the peptidoglycan layer. The chain is SAR-endolysin (19) from Bacteriophage PS119.